The chain runs to 1279 residues: MSSTKWTDEQRQAVFTKNCNLLVAAGAGAGKTAVLVQRIIEKILDKEEPIDIDKLLVVTFTNAAAAEMRERIGDAISKGLDENPESKALRKQLTLLNKSNIMTIHSFCLQIIKNNFHTIEIDPNFRICDETEGILMKQEAMDELFDELYEIENKDFINLVESYASRKDTRLQEVVLELHRFAKSAPFPYDWLLNMAEEFNVGEEFNFEETLWADMIMEDMKVLLHGFKNMLQQSIDVILNSEGIDYYYEPFKMDLNFINSLLEKSSFKEFRGEIIAYDFPKLPLKRNKDADKEAKERVKKLRDRVKKKILEIKNILNSYENEFIKKEFIFLYPSMKALSNLVILFDKKYEAKKRERDLIDFNDIEHLCLSILTDKDSEDHIIPSDTALDYRKKFTEVLIDEYQDSNLVQEVIMSMVSRVKGYWSFYNGQLMFNEEEINLEEPHIGLDIPNRFMVGDVKQSIYRFRQAKPEIFLDKYNEYSEEESIKNRKVKLFKNFRSREEVINGVNYLFKQIMSKTIGELDYTEEEALKVGASYGEEVKGEPIELCLMDKKYEISEEVLKEYNMDEEEALDNIQLEGRLVAKKIQKLVGNNLEGGLKVFDKKLGEYRNLQYRDIVILMRATSNWAPVFVEELAKEGIPVFADTNSGYFNTTEIKTIISLLQIIDNPLQDIPLLSVLRSPIASFTDDELIDIRMVNKNIAFYECMEIIYKLYKDEELDSYYSFYMEDEDKTNKIVKDIKEELKNKICSFIEKLNLWRKKSIHIDIDEFIWFLYVETGYYGYVGALPAGEQRQANLRILFQRAKQYEKTSYKGLFNFINFINKLKFSSGDMGSAKILGENENVVRIMSIHKSKGLEFPVVILSGTGKNFNMMDLNKNILFHRDLGYGPDYVDTERRIAYPSLVKNIIKNKIRLETLSEEMRILYVALTRAREKLIITGLINNMDKTVEDWLNLSDDKNKVPEYAVMSGKTYLDWIGPALIKHKDAVSLREELKITSGLSNIVDDKSKWKIELWNKKELLKEKVEENEVEISEKIKETLMNLGESNYKEEIYKKLSFKYKYDNASSIPTKLSVSDVKKQFILDEKENTEELFKKVELRKPMFMGEEKKISPSERGTIIHLFMQHLDLKKAENEEDIKEQINRLIEREFITYEQSKIINPYKILKFCRSELGKRMINSNNINREMPFSIEVPAVEIYRELDKDIYKDEKLIIQGIIDCYFEEEEGLVLLDYKTDYVNDIEEIKNRYEIQIKYYEEALNRITGKNVKDKYLYLFSVDNYIKID.

The UvrD-like helicase ATP-binding domain occupies T4–R499. A25–T32 contacts ATP. The UvrD-like helicase C-terminal domain maps to E526 to G853.

The protein belongs to the helicase family. AddA subfamily. In terms of assembly, heterodimer of AddA and AddB/RexB. Requires Mg(2+) as cofactor.

The enzyme catalyses Couples ATP hydrolysis with the unwinding of duplex DNA by translocating in the 3'-5' direction.. The catalysed reaction is ATP + H2O = ADP + phosphate + H(+). The heterodimer acts as both an ATP-dependent DNA helicase and an ATP-dependent, dual-direction single-stranded exonuclease. Recognizes the chi site generating a DNA molecule suitable for the initiation of homologous recombination. The AddA nuclease domain is required for chi fragment generation; this subunit has the helicase and 3' -&gt; 5' nuclease activities. The chain is ATP-dependent helicase/nuclease subunit A from Clostridium botulinum (strain Loch Maree / Type A3).